We begin with the raw amino-acid sequence, 196 residues long: dTTP/UTP pyrophosphatase (196 aa).

The active-site Proton acceptor is the Asp72.

Belongs to the Maf family. YhdE subfamily. A divalent metal cation serves as cofactor.

It localises to the cytoplasm. The enzyme catalyses dTTP + H2O = dTMP + diphosphate + H(+). It catalyses the reaction UTP + H2O = UMP + diphosphate + H(+). Functionally, nucleoside triphosphate pyrophosphatase that hydrolyzes dTTP and UTP. May have a dual role in cell division arrest and in preventing the incorporation of modified nucleotides into cellular nucleic acids. The sequence is that of dTTP/UTP pyrophosphatase from Chlamydia trachomatis serovar A (strain ATCC VR-571B / DSM 19440 / HAR-13).